Here is a 200-residue protein sequence, read N- to C-terminus: Probable nicotinate-nucleotide adenylyltransferase (200 aa).

It belongs to the NadD family.

It carries out the reaction nicotinate beta-D-ribonucleotide + ATP + H(+) = deamido-NAD(+) + diphosphate. It participates in cofactor biosynthesis; NAD(+) biosynthesis; deamido-NAD(+) from nicotinate D-ribonucleotide: step 1/1. Catalyzes the reversible adenylation of nicotinate mononucleotide (NaMN) to nicotinic acid adenine dinucleotide (NaAD). The polypeptide is Probable nicotinate-nucleotide adenylyltransferase (Clavibacter michiganensis subsp. michiganensis (strain NCPPB 382)).